Here is a 495-residue protein sequence, read N- to C-terminus: Siroheme synthase 2 (495 aa).

Positions 1–205 are precorrin-2 dehydrogenase /sirohydrochlorin ferrochelatase; sequence MDHYPIFLNL…GREREAEQAM (205 aa). NAD(+) contacts are provided by residues 22 to 23 and 43 to 44; these read ET and PD. Ser-130 bears the Phosphoserine mark. Positions 220-495 are uroporphyrinogen-III C-methyltransferase; the sequence is GEVYLVGAGP…HPAPADTEQA (276 aa). Residue Pro-229 participates in S-adenosyl-L-methionine binding. Residue Asp-252 is the Proton acceptor of the active site. The active-site Proton donor is Lys-274. S-adenosyl-L-methionine-binding positions include 305-307, Ile-310, 335-336, Met-387, and Ala-416; these read GGD and TA. Positions 471-495 are disordered; sequence FPEHGCLRGEPRPTRHPAPADTEQA.

The protein in the N-terminal section; belongs to the precorrin-2 dehydrogenase / sirohydrochlorin ferrochelatase family. In the C-terminal section; belongs to the precorrin methyltransferase family.

The catalysed reaction is uroporphyrinogen III + 2 S-adenosyl-L-methionine = precorrin-2 + 2 S-adenosyl-L-homocysteine + H(+). The enzyme catalyses precorrin-2 + NAD(+) = sirohydrochlorin + NADH + 2 H(+). It carries out the reaction siroheme + 2 H(+) = sirohydrochlorin + Fe(2+). Its pathway is cofactor biosynthesis; adenosylcobalamin biosynthesis; precorrin-2 from uroporphyrinogen III: step 1/1. It participates in cofactor biosynthesis; adenosylcobalamin biosynthesis; sirohydrochlorin from precorrin-2: step 1/1. It functions in the pathway porphyrin-containing compound metabolism; siroheme biosynthesis; precorrin-2 from uroporphyrinogen III: step 1/1. The protein operates within porphyrin-containing compound metabolism; siroheme biosynthesis; siroheme from sirohydrochlorin: step 1/1. Its pathway is porphyrin-containing compound metabolism; siroheme biosynthesis; sirohydrochlorin from precorrin-2: step 1/1. Its function is as follows. Multifunctional enzyme that catalyzes the SAM-dependent methylations of uroporphyrinogen III at position C-2 and C-7 to form precorrin-2 via precorrin-1. Then it catalyzes the NAD-dependent ring dehydrogenation of precorrin-2 to yield sirohydrochlorin. Finally, it catalyzes the ferrochelation of sirohydrochlorin to yield siroheme. In Halorhodospira halophila (strain DSM 244 / SL1) (Ectothiorhodospira halophila (strain DSM 244 / SL1)), this protein is Siroheme synthase 2.